The sequence spans 269 residues: Adenosylcobinamide-GDP ribazoletransferase (269 aa).

Transmembrane regions (helical) follow at residues 8 to 28, 41 to 61, 70 to 90, 114 to 136, and 196 to 216; these read QFNL…PTAI, YFPL…CFML, VCLL…DGLA, IGTY…LSSL, and VPAV…SACV.

Belongs to the CobS family. Requires Mg(2+) as cofactor.

It is found in the cell inner membrane. The enzyme catalyses alpha-ribazole + adenosylcob(III)inamide-GDP = adenosylcob(III)alamin + GMP + H(+). The catalysed reaction is alpha-ribazole 5'-phosphate + adenosylcob(III)inamide-GDP = adenosylcob(III)alamin 5'-phosphate + GMP + H(+). Its pathway is cofactor biosynthesis; adenosylcobalamin biosynthesis; adenosylcobalamin from cob(II)yrinate a,c-diamide: step 7/7. Its function is as follows. Joins adenosylcobinamide-GDP and alpha-ribazole to generate adenosylcobalamin (Ado-cobalamin). Also synthesizes adenosylcobalamin 5'-phosphate from adenosylcobinamide-GDP and alpha-ribazole 5'-phosphate. This is Adenosylcobinamide-GDP ribazoletransferase from Pseudoalteromonas atlantica (strain T6c / ATCC BAA-1087).